Reading from the N-terminus, the 176-residue chain is NAD(P)H-quinone oxidoreductase subunit 6, chloroplastic (176 aa).

Helical transmembrane passes span I10–T30, P32–L52, A61–M81, L92–I112, and F152–A172.

Belongs to the complex I subunit 6 family. As to quaternary structure, NDH is composed of at least 16 different subunits, 5 of which are encoded in the nucleus.

It is found in the plastid. It localises to the chloroplast thylakoid membrane. The enzyme catalyses a plastoquinone + NADH + (n+1) H(+)(in) = a plastoquinol + NAD(+) + n H(+)(out). The catalysed reaction is a plastoquinone + NADPH + (n+1) H(+)(in) = a plastoquinol + NADP(+) + n H(+)(out). Its function is as follows. NDH shuttles electrons from NAD(P)H:plastoquinone, via FMN and iron-sulfur (Fe-S) centers, to quinones in the photosynthetic chain and possibly in a chloroplast respiratory chain. The immediate electron acceptor for the enzyme in this species is believed to be plastoquinone. Couples the redox reaction to proton translocation, and thus conserves the redox energy in a proton gradient. This Drimys granadensis protein is NAD(P)H-quinone oxidoreductase subunit 6, chloroplastic (ndhG).